A 283-amino-acid chain; its full sequence is Hydrogenase expression/formation protein HoxQ (283 aa).

The disordered stretch occupies residues 1–29; the sequence is MNDDLPILPPGFGPGSHGEEERPDCPSMP.

It belongs to the HupH/HyaF family.

The polypeptide is Hydrogenase expression/formation protein HoxQ (hoxQ) (Azotobacter vinelandii).